The chain runs to 391 residues: Sister chromatid cohesion protein DCC1 (391 aa).

It belongs to the DCC1 family. Component of the ctf18-RFC complex which consists of ctf18, ctf8, dscc1 and the RFC complex.

It is found in the nucleus. In terms of biological role, loads pcna onto primed templates regulating velocity, spacing and restart activity of replication forks. May couple DNA replication to sister chromatid cohesion. In Danio rerio (Zebrafish), this protein is Sister chromatid cohesion protein DCC1 (dscc1).